Here is a 102-residue protein sequence, read N- to C-terminus: Large ribosomal subunit protein bL21 (102 aa).

The protein belongs to the bacterial ribosomal protein bL21 family. As to quaternary structure, part of the 50S ribosomal subunit. Contacts protein L20.

Its function is as follows. This protein binds to 23S rRNA in the presence of protein L20. The protein is Large ribosomal subunit protein bL21 of Lachnoclostridium phytofermentans (strain ATCC 700394 / DSM 18823 / ISDg) (Clostridium phytofermentans).